Reading from the N-terminus, the 299-residue chain is Tyrosine recombinase XerC (299 aa).

The 85-residue stretch at 1–85 folds into the Core-binding (CB) domain; sequence MERQLDAYCE…AVRGLYHYLN (85 aa). One can recognise a Tyr recombinase domain in the interval 106–285; that stretch reads RLPKTLDTDR…DFQHLATVYD (180 aa). Residues arginine 146, lysine 170, histidine 237, arginine 240, and histidine 263 contribute to the active site. Catalysis depends on tyrosine 272, which acts as the O-(3'-phospho-DNA)-tyrosine intermediate.

This sequence belongs to the 'phage' integrase family. XerC subfamily. Forms a cyclic heterotetrameric complex composed of two molecules of XerC and two molecules of XerD.

The protein resides in the cytoplasm. Site-specific tyrosine recombinase, which acts by catalyzing the cutting and rejoining of the recombining DNA molecules. The XerC-XerD complex is essential to convert dimers of the bacterial chromosome into monomers to permit their segregation at cell division. It also contributes to the segregational stability of plasmids. The sequence is that of Tyrosine recombinase XerC from Pseudomonas fluorescens.